The chain runs to 142 residues: 5-hydroxymethyl-dUMP N-hydrolase (142 aa).

Residues Gly7, Ile9, Arg10, Gly11, Ser78, Gly80, Glu84, and Ser108 each coordinate 5-hydroxymethyl-dUMP.

It belongs to the 2'-deoxynucleoside 5'-phosphate N-hydrolase 1 family. In terms of assembly, monomer and homodimer.

The protein localises to the cytoplasm. The protein resides in the nucleus. It catalyses the reaction 5-hydroxymethyl-dUMP + H2O = 5-hydroxymethyluracil + 2-deoxy-D-ribose 5-phosphate. In terms of biological role, part of a nucleotide salvage pathway that eliminates epigenetically modified 5-hydroxymethyl-dCMP (hmdCMP) in a two-step process entailing deamination to cytotoxic 5-hydroxymethyl-dUMP (hmdUMP), followed by its hydrolysis into 5-hydroxymethyluracil (hmU) and 2-deoxy-D-ribose 5-phosphate (deoxyribosephosphate). Catalyzes the second step in that pathway, the hydrolysis of the N-glycosidic bond in hmdUMP, degrading this cytotoxic nucleotide to avoid its genomic integration. This Tetraodon nigroviridis (Spotted green pufferfish) protein is 5-hydroxymethyl-dUMP N-hydrolase (dnph1).